The chain runs to 244 residues: Small ribosomal subunit protein uS3 (244 aa).

One can recognise a KH type-2 domain in the interval 39–110; it reads IRDYVRKNLS…QIRINVIEVE (72 aa). Residues 215 to 244 form a disordered region; that stretch reads EDAAPSNVGQPRRRNQQRRRQQFEDRSNEG. Positions 225-234 are enriched in basic residues; it reads PRRRNQQRRR. Positions 235 to 244 are enriched in basic and acidic residues; it reads QQFEDRSNEG.

This sequence belongs to the universal ribosomal protein uS3 family. As to quaternary structure, part of the 30S ribosomal subunit. Forms a tight complex with proteins S10 and S14.

Its function is as follows. Binds the lower part of the 30S subunit head. Binds mRNA in the 70S ribosome, positioning it for translation. This Synechococcus sp. (strain ATCC 27144 / PCC 6301 / SAUG 1402/1) (Anacystis nidulans) protein is Small ribosomal subunit protein uS3.